The sequence spans 152 residues: MKLILTADVDHLGSVGDTVEVKDGYGRNFLLPRGMAIVASRGAQKQADEIRRSRETKAVRDREHANEIKTAIQALGSVALPVKTAADSGKLFGSVTAGDVVAAIKKAGGPNLDKRIVRLPKAHIKAVGTHPVVMHLHPEIEVELSVDVVAES.

The protein belongs to the bacterial ribosomal protein bL9 family.

In terms of biological role, binds to the 23S rRNA. The protein is Large ribosomal subunit protein bL9 of Mycobacterium marinum (strain ATCC BAA-535 / M).